A 286-amino-acid chain; its full sequence is Nucleoid occlusion protein (286 aa).

The H-T-H motif DNA-binding region spans 147-166 (EALAQRLGKNQSTVANKLRL).

This sequence belongs to the ParB family.

Its subcellular location is the cytoplasm. It is found in the nucleoid. Functionally, effects nucleoid occlusion by binding relatively nonspecifically to DNA and preventing the assembly of the division machinery in the vicinity of the nucleoid, especially under conditions that disturb the cell cycle. It helps to coordinate cell division and chromosome segregation by preventing the formation of the Z ring through the nucleoid, which would cause chromosome breakage. The chain is Nucleoid occlusion protein from Oceanobacillus iheyensis (strain DSM 14371 / CIP 107618 / JCM 11309 / KCTC 3954 / HTE831).